Reading from the N-terminus, the 151-residue chain is Small ribosomal subunit protein uS15 (151 aa).

Belongs to the universal ribosomal protein uS15 family.

This Wuchereria bancrofti protein is Small ribosomal subunit protein uS15 (RPS13).